A 137-amino-acid chain; its full sequence is Large ribosomal subunit protein uL16 (137 aa).

This sequence belongs to the universal ribosomal protein uL16 family. Part of the 50S ribosomal subunit.

Its function is as follows. Binds 23S rRNA and is also seen to make contacts with the A and possibly P site tRNAs. This is Large ribosomal subunit protein uL16 from Streptococcus agalactiae serotype Ia (strain ATCC 27591 / A909 / CDC SS700).